The chain runs to 255 residues: Acetylglutamate kinase (255 aa).

Substrate contacts are provided by residues 40–41, arginine 62, and asparagine 153; that span reads GG.

This sequence belongs to the acetylglutamate kinase family. ArgB subfamily.

It localises to the cytoplasm. The catalysed reaction is N-acetyl-L-glutamate + ATP = N-acetyl-L-glutamyl 5-phosphate + ADP. The protein operates within amino-acid biosynthesis; L-arginine biosynthesis; N(2)-acetyl-L-ornithine from L-glutamate: step 2/4. Its function is as follows. Catalyzes the ATP-dependent phosphorylation of N-acetyl-L-glutamate. The chain is Acetylglutamate kinase from Bacillus cereus (strain 03BB102).